Here is a 1347-residue protein sequence, read N- to C-terminus: Protocadherin-11 X-linked (1347 aa).

A signal peptide spans 1-23 (MDLLSGTYIFAVLLACVVFHSGA). Residues 24–812 (QEKNYTIREE…VSSPTSDYVK (789 aa)) lie on the Extracellular side of the membrane. 7 consecutive Cadherin domains span residues 26-139 (KNYT…APLF), 140-249 (PATV…HPVF), 250-355 (KETE…VPSI), 362-466 (NPVN…APVF), 467-570 (TQSF…SPVF), 571-673 (THNE…KPVF), and 677-795 (PSNY…APVT). N27, N48, and N54 each carry an N-linked (GlcNAc...) asparagine glycan. N344 carries N-linked (GlcNAc...) asparagine glycosylation. N-linked (GlcNAc...) asparagine glycosylation is present at N553. An N-linked (GlcNAc...) asparagine glycan is attached at N773. Residues 813-833 (ILVAAVAGTITVVVVIFITAV) form a helical membrane-spanning segment. The Cytoplasmic segment spans residues 834 to 1347 (VRCRQAPHLK…DSPVMEEHPL (514 aa)). Disordered stretches follow at residues 1057–1091 (LPEG…GYPQ), 1097–1116 (RATP…ESTF), and 1325–1347 (TFTP…EHPL).

Its subcellular location is the cell membrane. Its function is as follows. Potential calcium-dependent cell-adhesion protein. The sequence is that of Protocadherin-11 X-linked (PCDH11X) from Pan troglodytes (Chimpanzee).